A 147-amino-acid polypeptide reads, in one-letter code: MPGSKSPRGMFAARKLELKRKKFRWSDLEYKRRILQLKKKVDPLEGAPQARGIVVEKVGIESRQPNSAVRKCVRVQLLKNGKVVTAFLPGDGALLFVNEHDEVVIEGIGGPEGRAYGDLPGVRWKVIKVNGVSLKEILRGRKQKPTR.

This sequence belongs to the universal ribosomal protein uS12 family. In terms of assembly, part of the 30S ribosomal subunit.

Functionally, with S4 and S5 plays an important role in translational accuracy. Located at the interface of the 30S and 50S subunits. The sequence is that of Small ribosomal subunit protein uS12 from Thermofilum pendens (strain DSM 2475 / Hrk 5).